Here is a 148-residue protein sequence, read N- to C-terminus: uncharacterized protein (148 aa).

A signal peptide spans 1–22; the sequence is MVQTVLNSVWLWRSVLLRLTFS.

This is an uncharacterized protein from Saccharomyces cerevisiae (strain ATCC 204508 / S288c) (Baker's yeast).